An 888-amino-acid chain; its full sequence is DNA mismatch repair protein MutS (888 aa).

641–648 (GPNMAGKS) is a binding site for ATP.

It belongs to the DNA mismatch repair MutS family.

Its function is as follows. This protein is involved in the repair of mismatches in DNA. It is possible that it carries out the mismatch recognition step. This protein has a weak ATPase activity. In Rickettsia bellii (strain OSU 85-389), this protein is DNA mismatch repair protein MutS.